Consider the following 821-residue polypeptide: DNA ligase (821 aa).

NAD(+)-binding positions include 50–54, 99–100, and Glu140; these read DAEYD and SL. Lys142 serves as the catalytic N6-AMP-lysine intermediate. The NAD(+) site is built by Arg163, Glu200, Lys319, and Lys343. Zn(2+)-binding residues include Cys452, Cys455, Cys470, and Cys476. Positions 742 to 821 constitute a BRCT domain; the sequence is AAALPLEGKT…AGLQALLAGN (80 aa).

The protein belongs to the NAD-dependent DNA ligase family. LigA subfamily. Requires Mg(2+) as cofactor. Mn(2+) serves as cofactor.

The catalysed reaction is NAD(+) + (deoxyribonucleotide)n-3'-hydroxyl + 5'-phospho-(deoxyribonucleotide)m = (deoxyribonucleotide)n+m + AMP + beta-nicotinamide D-nucleotide.. In terms of biological role, DNA ligase that catalyzes the formation of phosphodiester linkages between 5'-phosphoryl and 3'-hydroxyl groups in double-stranded DNA using NAD as a coenzyme and as the energy source for the reaction. It is essential for DNA replication and repair of damaged DNA. The protein is DNA ligase of Chromobacterium violaceum (strain ATCC 12472 / DSM 30191 / JCM 1249 / CCUG 213 / NBRC 12614 / NCIMB 9131 / NCTC 9757 / MK).